A 154-amino-acid polypeptide reads, in one-letter code: Ribonuclease H (154 aa).

The RNase H type-1 domain maps to 1–141 (MKRIEAYTDG…ADELAREGME (141 aa)). Residues Asp-9, Glu-47, Asp-69, and Asp-133 each coordinate Mg(2+).

The protein belongs to the RNase H family. In terms of assembly, monomer. Requires Mg(2+) as cofactor.

Its subcellular location is the cytoplasm. The enzyme catalyses Endonucleolytic cleavage to 5'-phosphomonoester.. Its function is as follows. Endonuclease that specifically degrades the RNA of RNA-DNA hybrids. The protein is Ribonuclease H of Brucella anthropi (strain ATCC 49188 / DSM 6882 / CCUG 24695 / JCM 21032 / LMG 3331 / NBRC 15819 / NCTC 12168 / Alc 37) (Ochrobactrum anthropi).